We begin with the raw amino-acid sequence, 429 residues long: Alpha-L-rhamnosidase rgxB (429 aa).

A signal peptide spans 1–20; the sequence is MAPIALKILLFTSLIVPSIS. Residues Asn-67, Asn-77, Asn-97, Asn-103, Asn-112, Asn-135, and Asn-219 are each glycosylated (N-linked (GlcNAc...) asparagine). Residues 217–238 form a PbH1 1 repeat; the sequence is SKNITLTNWEVVNGDDSISTKA. The active-site Proton donor is the Asp-231. N-linked (GlcNAc...) asparagine glycosylation is found at Asn-239, Asn-247, Asn-278, and Asn-344. PbH1 repeat units follow at residues 240-260 and 271-292; these read STDI…AIGS and VERL…YFKT. Cys-374 and Cys-380 are oxidised to a cystine. 3 N-linked (GlcNAc...) asparagine glycosylation sites follow: Asn-387, Asn-395, and Asn-414.

This sequence belongs to the glycosyl hydrolase 28 family.

Its subcellular location is the secreted. It catalyses the reaction Hydrolysis of terminal non-reducing alpha-L-rhamnose residues in alpha-L-rhamnosides.. Alpha-L-rhamnosidase which is able to degrade p-nitrophenyl-alpha-L-rhamnopyranoside (pnp_Rha). The natural substrate of this enzyme has not been identified yet. This is Alpha-L-rhamnosidase rgxB (rgxB) from Aspergillus niger (strain ATCC MYA-4892 / CBS 513.88 / FGSC A1513).